We begin with the raw amino-acid sequence, 90 residues long: YcgL domain-containing protein YpsIP31758_2009 (90 aa).

Positions 1 to 85 constitute a YcgL domain; that stretch reads MLCAIYRSPK…PPESLLKMHL (85 aa).

The protein is YcgL domain-containing protein YpsIP31758_2009 of Yersinia pseudotuberculosis serotype O:1b (strain IP 31758).